Consider the following 209-residue polypeptide: Imidazole glycerol phosphate synthase subunit HisH (209 aa).

Positions 4–209 constitute a Glutamine amidotransferase type-1 domain; sequence PVVVFEYGSG…RLLANWIGSL (206 aa). Residue cysteine 82 is the Nucleophile of the active site. Residues histidine 190 and glutamate 192 contribute to the active site.

As to quaternary structure, heterodimer of HisH and HisF.

Its subcellular location is the cytoplasm. The catalysed reaction is 5-[(5-phospho-1-deoxy-D-ribulos-1-ylimino)methylamino]-1-(5-phospho-beta-D-ribosyl)imidazole-4-carboxamide + L-glutamine = D-erythro-1-(imidazol-4-yl)glycerol 3-phosphate + 5-amino-1-(5-phospho-beta-D-ribosyl)imidazole-4-carboxamide + L-glutamate + H(+). The enzyme catalyses L-glutamine + H2O = L-glutamate + NH4(+). The protein operates within amino-acid biosynthesis; L-histidine biosynthesis; L-histidine from 5-phospho-alpha-D-ribose 1-diphosphate: step 5/9. IGPS catalyzes the conversion of PRFAR and glutamine to IGP, AICAR and glutamate. The HisH subunit catalyzes the hydrolysis of glutamine to glutamate and ammonia as part of the synthesis of IGP and AICAR. The resulting ammonia molecule is channeled to the active site of HisF. The sequence is that of Imidazole glycerol phosphate synthase subunit HisH from Leifsonia xyli subsp. xyli (strain CTCB07).